Consider the following 446-residue polypeptide: Thymidine phosphorylase (446 aa).

It belongs to the thymidine/pyrimidine-nucleoside phosphorylase family. As to quaternary structure, homodimer.

It carries out the reaction thymidine + phosphate = 2-deoxy-alpha-D-ribose 1-phosphate + thymine. It participates in pyrimidine metabolism; dTMP biosynthesis via salvage pathway; dTMP from thymine: step 1/2. The enzymes which catalyze the reversible phosphorolysis of pyrimidine nucleosides are involved in the degradation of these compounds and in their utilization as carbon and energy sources, or in the rescue of pyrimidine bases for nucleotide synthesis. The protein is Thymidine phosphorylase of Idiomarina loihiensis (strain ATCC BAA-735 / DSM 15497 / L2-TR).